The primary structure comprises 230 residues: Cytidylate kinase (230 aa).

16 to 24 lines the ATP pocket; it reads GPASAGKST.

It belongs to the cytidylate kinase family. Type 1 subfamily.

Its subcellular location is the cytoplasm. The enzyme catalyses CMP + ATP = CDP + ADP. It catalyses the reaction dCMP + ATP = dCDP + ADP. This chain is Cytidylate kinase, found in Lactobacillus gasseri (strain ATCC 33323 / DSM 20243 / BCRC 14619 / CIP 102991 / JCM 1131 / KCTC 3163 / NCIMB 11718 / NCTC 13722 / AM63).